We begin with the raw amino-acid sequence, 473 residues long: Photosystem II CP43 reaction center protein (473 aa).

A propeptide spanning residues 1 to 14 is cleaved from the precursor; it reads MKTLYSLRRFYHVE. The residue at position 15 (Thr-15) is an N-acetylthreonine. Phosphothreonine is present on Thr-15. The next 5 helical transmembrane spans lie at 69–93, 134–155, 178–200, 255–275, and 291–312; these read LFEVAHFVPEKPMYEQGLILLPHLA, LLGPETLEESFPFFGYVWKDRN, KALYFGGVYDTWAPGGGDVRKIT, KPFAWARRALVWSGEAYLSYS, and WFNNTAYPSEFYGPTGPEASQA. Glu-367 is a [CaMn4O5] cluster binding site. The helical transmembrane segment at 447–471 threads the bilayer; sequence RARAAAAGFEKGIDRDFEPVLSMTP.

Belongs to the PsbB/PsbC family. PsbC subfamily. In terms of assembly, PSII is composed of 1 copy each of membrane proteins PsbA, PsbB, PsbC, PsbD, PsbE, PsbF, PsbH, PsbI, PsbJ, PsbK, PsbL, PsbM, PsbT, PsbX, PsbY, PsbZ, Psb30/Ycf12, at least 3 peripheral proteins of the oxygen-evolving complex and a large number of cofactors. It forms dimeric complexes. Requires Binds multiple chlorophylls and provides some of the ligands for the Ca-4Mn-5O cluster of the oxygen-evolving complex. It may also provide a ligand for a Cl- that is required for oxygen evolution. PSII binds additional chlorophylls, carotenoids and specific lipids. as cofactor.

Its subcellular location is the plastid. The protein resides in the chloroplast thylakoid membrane. Its function is as follows. One of the components of the core complex of photosystem II (PSII). It binds chlorophyll and helps catalyze the primary light-induced photochemical processes of PSII. PSII is a light-driven water:plastoquinone oxidoreductase, using light energy to abstract electrons from H(2)O, generating O(2) and a proton gradient subsequently used for ATP formation. The protein is Photosystem II CP43 reaction center protein of Aethionema cordifolium (Lebanon stonecress).